The sequence spans 252 residues: Probable phosphatase Shewana3_2794 (252 aa).

Zn(2+) contacts are provided by His-8, His-10, His-16, His-41, Glu-74, His-102, His-132, Asp-193, and His-195.

The protein belongs to the PHP family. Zn(2+) serves as cofactor.

The sequence is that of Probable phosphatase Shewana3_2794 from Shewanella sp. (strain ANA-3).